The primary structure comprises 162 residues: Transcription elongation factor GreA (162 aa).

Residues 45–74 (ENAEYEAAREKQAFIEGRIKELEDMTARAE) are a coiled coil.

The protein belongs to the GreA/GreB family.

Necessary for efficient RNA polymerase transcription elongation past template-encoded arresting sites. The arresting sites in DNA have the property of trapping a certain fraction of elongating RNA polymerases that pass through, resulting in locked ternary complexes. Cleavage of the nascent transcript by cleavage factors such as GreA or GreB allows the resumption of elongation from the new 3'terminus. GreA releases sequences of 2 to 3 nucleotides. The sequence is that of Transcription elongation factor GreA from Rickettsia conorii (strain ATCC VR-613 / Malish 7).